The chain runs to 823 residues: DNA topoisomerase 4 subunit A (823 aa).

Positions 30 to 496 (LPDIRDGLKP…KAIEIDTASL (467 aa)) constitute a Topo IIA-type catalytic domain. Tyr-118 (O-(5'-phospho-DNA)-tyrosine intermediate) is an active-site residue.

Belongs to the type II topoisomerase GyrA/ParC subunit family. ParC type 2 subfamily. As to quaternary structure, heterotetramer composed of ParC and ParE.

It is found in the cell membrane. It catalyses the reaction ATP-dependent breakage, passage and rejoining of double-stranded DNA.. Inhibited by quinolones, such as levofloxacin. In terms of biological role, topoisomerase IV is essential for chromosome segregation. It relaxes supercoiled DNA. Performs the decatenation events required during the replication of a circular DNA molecule. The polypeptide is DNA topoisomerase 4 subunit A (Streptococcus pneumoniae serotype 4 (strain ATCC BAA-334 / TIGR4)).